A 321-amino-acid chain; its full sequence is MAFLPNLVATPMSLASSYSKPVTLGIIGGTGLYKLGALTPVAQIDIDTPWGKPSSPITISETKSGFPVAFLARHGVNHDLTPTDVPSRANIAALKKVGVKAIVAFSAVGSLQEEIAPRDFVVPTQIIDRTKGIRPSSFFEKGFVGHVGFGEPFDVALGKLVAEHADKAFDNSKYKIHTKAKAGKDLTLVCMEGPAFSTRAESQLYRSWNGAVINMSAIPESKLAKEAEIAYQMICMSTDYDAWKEDEEPVTVEQVVSNLTANAESATGVVEALLEPLEKALADKSIGYDLDGSMKFAVSTAPAARDATVAKNLDFLHPGYW.

Phosphate-binding positions include Thr-30, Arg-73–His-74, and Ser-106–Ala-107. Residue Met-215 participates in substrate binding. Position 216 (Ser-216) interacts with phosphate. Asp-239 to Asp-241 contacts substrate.

Belongs to the PNP/MTAP phosphorylase family. MTAP subfamily. Homotrimer.

Its subcellular location is the cytoplasm. It is found in the nucleus. The enzyme catalyses S-methyl-5'-thioadenosine + phosphate = 5-(methylsulfanyl)-alpha-D-ribose 1-phosphate + adenine. It participates in amino-acid biosynthesis; L-methionine biosynthesis via salvage pathway; S-methyl-5-thio-alpha-D-ribose 1-phosphate from S-methyl-5'-thioadenosine (phosphorylase route): step 1/1. Catalyzes the reversible phosphorylation of S-methyl-5'-thioadenosine (MTA) to adenine and 5-methylthioribose-1-phosphate. Involved in the breakdown of MTA, a major by-product of polyamine biosynthesis. Responsible for the first step in the methionine salvage pathway after MTA has been generated from S-adenosylmethionine. Has broad substrate specificity with 6-aminopurine nucleosides as preferred substrates. This is S-methyl-5'-thioadenosine phosphorylase from Yarrowia lipolytica (strain CLIB 122 / E 150) (Yeast).